Here is a 369-residue protein sequence, read N- to C-terminus: Somatostatin receptor type 2 (369 aa).

Over 1-43 (MEMSSEQLNGSQVWVSSPFDLNGSLGPSNGSNQTEPYYDMTSN) the chain is Extracellular. Residues N9, N22, N29, and N32 are each glycosylated (N-linked (GlcNAc...) asparagine). Residues 44–67 (AVLTFIYFVVCVVGLCGNTLVIYV) form a helical membrane-spanning segment. Over 68 to 78 (ILRYAKMKTIT) the chain is Cytoplasmic. The chain crosses the membrane as a helical span at residues 79–103 (NIYILNLAIADELFMLGLPFLAMQV). Residues 104–118 (ALVHWPFGKAICRVV) lie on the Extracellular side of the membrane. A disulfide bridge connects residues C115 and C193. The chain crosses the membrane as a helical span at residues 119–138 (MTVDGINQFTSIFCLTVMSI). At 139-161 (DRYLAVVHPIKSAKWRRPRTAKM) the chain is on the cytoplasmic side. Residues 162 to 181 (INVAVWCVSLLVILPIMIYA) traverse the membrane as a helical segment. The Extracellular portion of the chain corresponds to 182-207 (GLRSNQWGRSSCTINWPGESGAWYTG). The helical transmembrane segment at 208 to 229 (FIIYAFILGFLVPLTIICLCYL) threads the bilayer. Over 230-253 (FIIIKVKSSGIRVGSSKRKKSEKK) the chain is Cytoplasmic. The chain crosses the membrane as a helical span at residues 254 to 278 (VTRMVSIVVAVFIFCWLPFYIFNVS). Residues 279–288 (SVSVAISPTP) are Extracellular-facing. The chain crosses the membrane as a helical span at residues 289–303 (ALKGMFDFVVILTYA). The Cytoplasmic segment spans residues 304–369 (NSCANPILYA…LLNGDLQTSI (66 aa)). A lipid anchor (S-palmitoyl cysteine) is attached at C328. 3 positions are modified to phosphoserine: S341, S343, and S348. Phosphothreonine occurs at positions 353 and 354.

It belongs to the G-protein coupled receptor 1 family. Homodimer and heterodimer with SSTR3 and SSTR5. Heterodimerization with SSTR3 inactivates SSTR3 receptor function. Heterodimerization with SSTR5 is enhanced by agonist stimulation of SSTR2 and increases SSTR2 cell growth inhibition activity. Following agonist stimulation, homodimers dissociate into monomers which is required for receptor internalization. Interacts with beta-arrestin; this interaction is necessary for receptor internalization and is destabilized by heterodimerization with SSTR5 which results in increased recycling of SSTR2 to the cell surface. Interacts (via C-terminus) with SHANK1 (via PDZ domain). Phosphorylated on serine and threonine residues in response to agonist stimulation, leading to receptor desensitization and rapid internalization. Phosphorylated to a greater extent on serine than threonine residues. Threonine phosphorylation is required for arrestin binding and receptor endocytosis but is not necessary for desensitization. As to expression, cerebrum and kidney.

The protein localises to the cell membrane. It is found in the cytoplasm. Receptor for somatostatin-14 and -28. This receptor is coupled via pertussis toxin sensitive G proteins to inhibition of adenylyl cyclase. In addition it stimulates phosphotyrosine phosphatase and PLC via pertussis toxin insensitive as well as sensitive G proteins. Inhibits calcium entry by suppressing voltage-dependent calcium channels. Acts as the functionally dominant somatostatin receptor in pancreatic alpha- and beta-cells where it mediates the inhibitory effect of somatostatin-14 on hormone secretion. Inhibits cell growth through enhancement of MAPK1 and MAPK2 phosphorylation and subsequent up-regulation of CDKN1B. Stimulates neuronal migration and axon outgrowth and may participate in neuron development and maturation during brain development. Mediates negative regulation of insulin receptor signaling through PTPN6. Inactivates SSTR3 receptor function following heterodimerization. In Mus musculus (Mouse), this protein is Somatostatin receptor type 2 (Sstr2).